The primary structure comprises 271 residues: Proteasome inhibitor PI31 subunit (271 aa).

Alanine 2 is modified (N-acetylalanine). Residues 2–150 (AGLEVLFASA…PIHEQWEKAR (149 aa)) are important for homodimerization and interaction with FBXO7. Serine 153 and serine 189 each carry phosphoserine. Arginine 205 bears the Omega-N-methylarginine mark. Arginine 219 carries the asymmetric dimethylarginine modification. Residues 226–271 (SGLPNRLPPGAVPPGARFDPFGPIGTSPSGPNPDHLPPPGYDDMYL) form a disordered region. Omega-N-methylarginine is present on arginine 231. At serine 252 the chain carries Phosphoserine. A compositionally biased stretch (pro residues) spans 255 to 265 (GPNPDHLPPPG).

The protein belongs to the proteasome inhibitor PI31 family. Monomer and homodimer. Interacts with FBXO7.

The protein localises to the cytoplasm. Its subcellular location is the endoplasmic reticulum. Its function is as follows. Plays an important role in control of proteasome function. Inhibits the hydrolysis of protein and peptide substrates by the 20S proteasome. Also inhibits the activation of the proteasome by the proteasome regulatory proteins PA700 and PA28. The protein is Proteasome inhibitor PI31 subunit (Psmf1) of Mus musculus (Mouse).